The following is a 299-amino-acid chain: MPESKRLRIAIQKSGRLSIESMKLLKSCGVKFTVNEQRLIAHSDNMPIDLLRVRDDDIPGLVMDGVVDMGIIGENVLEEEQIERERLDKPSTCIKLRELDFGACRLSLAVPNEFNYEDAASLEGLRIATSYPNLLRRYMQRKGITYNDCMLKGSVEVAPRAGLSDAICDLVSTGATLEANGLYETEVIYQSKACIIQSSQPQEPAKQALIDKILSRINGVVRAKESKYILLHAPTETLEQIVALLPGAENPTVLPLNDDTNRVAIHAVSTEDLFWDTMEELTKLGASSILVMPIEKMMG.

The protein belongs to the ATP phosphoribosyltransferase family. Long subfamily. It depends on Mg(2+) as a cofactor.

It localises to the cytoplasm. It carries out the reaction 1-(5-phospho-beta-D-ribosyl)-ATP + diphosphate = 5-phospho-alpha-D-ribose 1-diphosphate + ATP. It participates in amino-acid biosynthesis; L-histidine biosynthesis; L-histidine from 5-phospho-alpha-D-ribose 1-diphosphate: step 1/9. With respect to regulation, feedback inhibited by histidine. In terms of biological role, catalyzes the condensation of ATP and 5-phosphoribose 1-diphosphate to form N'-(5'-phosphoribosyl)-ATP (PR-ATP). Has a crucial role in the pathway because the rate of histidine biosynthesis seems to be controlled primarily by regulation of HisG enzymatic activity. This is ATP phosphoribosyltransferase from Shewanella sediminis (strain HAW-EB3).